The following is a 133-amino-acid chain: Ribonuclease P protein component (133 aa).

The protein belongs to the RnpA family. As to quaternary structure, consists of a catalytic RNA component (M1 or rnpB) and a protein subunit.

It catalyses the reaction Endonucleolytic cleavage of RNA, removing 5'-extranucleotides from tRNA precursor.. RNaseP catalyzes the removal of the 5'-leader sequence from pre-tRNA to produce the mature 5'-terminus. It can also cleave other RNA substrates such as 4.5S RNA. The protein component plays an auxiliary but essential role in vivo by binding to the 5'-leader sequence and broadening the substrate specificity of the ribozyme. The sequence is that of Ribonuclease P protein component from Corynebacterium glutamicum (strain R).